Here is a 408-residue protein sequence, read N- to C-terminus: Putative gustatory receptor 98c (408 aa).

The Cytoplasmic segment spans residues 1-42; that stretch reads MEMEAKRSRLLTTARPYLQVLSLFGLTPPAEFFTRTLRKRRR. The chain crosses the membrane as a helical span at residues 43–63; sequence FCWMAGYSLYLIAILLMVFYE. Residues 64–92 lie on the Extracellular side of the membrane; sequence FHANIVSLHLEIYKFHVEDFSKVMGRTQK. The helical transmembrane segment at 93 to 113 threads the bilayer; sequence FLIVAIATCNQLNILLNYGRL. Residues 114–146 lie on the Cytoplasmic side of the membrane; it reads GLIYDEIANLDLGIDKSSKNFCGKSHWWSFRLR. The chain crosses the membrane as a helical span at residues 147-167; sequence LTLSIGLWMVIIIGVIPRLTL. The Extracellular segment spans residues 168 to 183; sequence GRAGPFFHWVNQVLTQ. The helical transmembrane segment at 184 to 204 threads the bilayer; that stretch reads IILIMLQLKGPEYCLFVLLVY. At 205 to 261 the chain is on the cytoplasmic side; it reads ELILRTRHVLEQLKDDLEDFDCGARIQELCVTLKQNQLLIGRIWRLVDEIGAYFRWS. Residues 262–282 form a helical membrane-spanning segment; it reads MTLLFLYNGLTILHVVNWAII. Over 283 to 296 the chain is Extracellular; sequence RSIDPNDCCQLNRL. Residues 297 to 317 form a helical membrane-spanning segment; the sequence is GSITFLSFNLLLTCFFSECCV. The Cytoplasmic portion of the chain corresponds to 318–367; sequence KTYNSISYILHQIGCLPTAEEFQMLKMGLKEYILQMQHLKLLFTCGGLFD. The helical transmembrane segment at 368–388 threads the bilayer; the sequence is INIKLFGGMLVTLCGYVIIIV. The Extracellular segment spans residues 389–408; the sequence is QFKIQDFALIGYRQNTSDTS. Asparagine 403 carries N-linked (GlcNAc...) asparagine glycosylation.

It belongs to the insect chemoreceptor superfamily. Gustatory receptor (GR) family. Gr2a subfamily.

It localises to the cell membrane. Probable gustatory receptor which mediates acceptance or avoidance behavior, depending on its substrates. This is Putative gustatory receptor 98c (Gr98c) from Drosophila melanogaster (Fruit fly).